We begin with the raw amino-acid sequence, 489 residues long: Diaminopimelate decarboxylase 2, chloroplastic (489 aa).

The N-terminal 50 residues, 1–50 (MAAVTQFLSQPSSIRGTLNQYQLNQTSLSRIPFLSLKSTLKPLKRLSVKA), are a transit peptide targeting the chloroplast. Ala51 is subject to N-acetylalanine. Lys130 bears the N6-(pyridoxal phosphate)lysine mark. Residues Gly309 and 345–348 (EPGR) contribute to the pyridoxal 5'-phosphate site. Substrate is bound by residues Arg348, Arg384, and Tyr388. Catalysis depends on Cys416, which acts as the Proton donor. The substrate site is built by Glu417 and Tyr445. Residue Tyr445 participates in pyridoxal 5'-phosphate binding.

The protein belongs to the Orn/Lys/Arg decarboxylase class-II family. LysA subfamily. Homodimer. Requires pyridoxal 5'-phosphate as cofactor.

It is found in the plastid. The protein localises to the chloroplast. It carries out the reaction meso-2,6-diaminopimelate + H(+) = L-lysine + CO2. Its pathway is amino-acid biosynthesis; L-lysine biosynthesis via DAP pathway; L-lysine from DL-2,6-diaminopimelate: step 1/1. Functionally, specifically catalyzes the decarboxylation of meso-diaminopimelate (meso-DAP) to L-lysine. The sequence is that of Diaminopimelate decarboxylase 2, chloroplastic (LYSA2) from Arabidopsis thaliana (Mouse-ear cress).